The chain runs to 110 residues: Hydrogenase maturation factor HypA (110 aa).

His2 serves as a coordination point for Ni(2+). Zn(2+) is bound by residues Cys70, Cys73, Cys86, and Cys89.

It belongs to the HypA/HybF family.

Involved in the maturation of [NiFe] hydrogenases. Required for nickel insertion into the metal center of the hydrogenase. This chain is Hydrogenase maturation factor HypA, found in Geobacter sulfurreducens (strain ATCC 51573 / DSM 12127 / PCA).